Consider the following 278-residue polypeptide: Tropomyosin A (278 aa).

The stretch at 1–270 (IMMAMKLEKE…YRAISGELDT (270 aa)) forms a coiled coil. The disordered stretch occupies residues 92-134 (DFEQSSGRLTETSTKLDDASKAAEESERNRKTLETRSISDDER). The span at 95-104 (QSSGRLTETS) shows a compositional bias: polar residues. A compositionally biased stretch (basic and acidic residues) spans 105-134 (TKLDDASKAAEESERNRKTLETRSISDDER).

This sequence belongs to the tropomyosin family. As to quaternary structure, homodimer.

Its function is as follows. Tropomyosin, in association with the troponin complex, plays a central role in the calcium dependent regulation of muscle contraction. The chain is Tropomyosin A from Echinococcus granulosus (Hydatid tapeworm).